The chain runs to 2742 residues: MFCLWIFSLAFLHLHLCSVSSSSLEGSGFFVGWINASSLQLFASIGGCDLSPCMDEGQEGMEALYRSEEPFQCSIRASASPGRRQAGRTCVRKVPGNLAVHCHLLSENEGLEEEDLLRITVMTPRGQSSLQVNVSHGGLLTACSDWIWNTSEKHKNNVPASGLHLGISLEVPCCTSCTRFGSDSELVEEQCSALHVSVSDVLVKDYICCLTPRDKDKTLNRTETPCLYSSNSLKDSLVRGRVYQMSFEECFRWHLLVVLLMLEAQYNHSQEVHEDPSSTVKLCDYAVRIHAEKQAYSTNTDIPLLAVVDILDPVEFLWDFGDFTSARANSRTITKRYTNPGIYKLVVVASWGQMSVRSHVLSLVVQRAVKLNRLVHEPSVLQNHTVTVSCRVNVGTNLTFLWNFGDGTVRTGLSTEQHVFTRTGEFRVMVIASNLVSSASLSSYLFVVDRPCQPPPVKNLGPPNIQVRRNEVVFLGVTFESELNCNVSRELHYSWTVYDSAGLTFPLPLTNTHRQSLVLQSYTLPYGIYKAIARVQIVGSVVYSNYSVRLQVVPNSVVVVIQGGTNIYVNTKSSNEVTLDGQASYDPDFPLNPLRYSWTCQPVSTISSSCFSQSIPTSYPVLKFPTSLLKSNFDQFKFTLTVHSGERSASSEIFLTLTSHLAGKLFVHCPECQGDQVSWDQSFSVRAECEDCNVSAEFIQYSWSLFRVNASSKPVAEIPFCYTVDLNAPSAVLENASTPTPAPEMSPSHHFNADWTRFTEDSLASSSPSRIYKSKNRNSELTDSPVSSVTVGFSGSESFNGPPGVDRGSSQFSNFPGQRDMFSEFQSDPESSAEWEFTFPYLESEDLRGQRGDSRVPFPRPEEGDPGISAGRPKETDMESFPSDSDSFSHSSSNKGEGSNLVDPRPSVRLQKPGLLDLHRDSVDKSLFESYTYTGISSCFLSFRSFSLKPSSTYMLELTAKSQRRFYGQTQLFLKVKPVPKGVACQVQPVRGIELYTHFSIFCTSGREDLIYTYSFSVGGRMPRILYQGRDFLYYFSLPSGDPTDDYKVIIYTEIRSSMYGSAKKLCPVTVRVEPSFVRNASSSYSHHEPDLMISDSGLRNVSVLVQLGNIAEIYNYISLLSTILNRLSLDSQANTHALKHLRNVLICIVCKLEYSAQASPADGIFILNELLRVTSQVTVQSARWVTAHVGALSVQFSESNRSILSALVSLLSSSLQVVTSSPETSDSADSPQPLESHLVTGKSRNAFVDDADHCITDLSETTYNKQSEPVPKRLMMRLVNDLLQTTSDLMLRNFDLQKTKELQVQSDLITLCAGFLNKTSTAINCGLITFFLPASLIKMLLLHDGISAKRGFSQREQPSCVQRIGMELLHNPYEWGRYPIQLKGPVADLSLYSCKTRRKIPVHSFLQPITVELRHPQKTSSMSEYTLLRSQINYHNFSITQEHLQQAVQVTVVFTAPPHMAFPVKILFRMFERPTPSMHHLHRLLNWRNNTILLTLPPSYLSAAGVGHLALLDANFGKTPTRRHLAEQISYSLTVESSLCLSWEDQQGSWTQNGCRAQTNDKTSAVNCSCHHLKPLKVLQQQIQSSHFRADLDQFLSVSRDLTVVFVLLLCVSLNIPVLVWCKKTDATSEENNRAHFLPDNSATDQHFYAVTVHTGLCSAARMSARVYVVLHGEDGCSQTKELHVPGCTLFRRNSQNTFILSVADSLGSVQGVHIWHNNSGPSPEWYLKQVQVSELMPGHMEGRSWQFISQCWLAVNKGDGQVERMLRVSTHGLTFSKMLFLKLFEYMPDYHIWMSVYTCPSPHLFTRAQRLCVCLLLFLGYACVNIIITHQRDDQLPFDLGVIDVTSVSIATGLVSVVAVLPVAMVISFLFRVKSGRMTLENYDNVFSKRPSGKTKYQDTDFLSVSTTNLENKDADDKEAVTPQRNKRRKDSVSFESIHELLFQEVLQVSRRRSLFLKKSKGNDSELSPQSSEFCGALKATKNEAQSVRVKRRYRLASLLYHCVAWTLCLLFCLSCLILSAVLGTRLNSGKILHWIHSLFVSLTFCFFVIHPATILVLAAVVSWRFKRSQDFHCFFNKMNSHLEDLKHQDPDQLRPSAFTRTRAPNAEKILEARQRARYLRRVHPPTRAELRKTRTKRKKQAVIHKMLRDLCLCGSMFFLMVCITYGSPVDEHYPLNAAFRRHFIRAHGDDFMSIKKYEDWWKWAQTSLLSSLYYNESENPQMSFISIGAPLVQKTEVCGTFHSQVSMVTPPRPRYHTGSSSKQEVTVGLGYTRSEGASKLRLLHLSGWLSEQTVALKVQFSLYSPAPNLFSSVTLLSEQSSTGLLQSSATVQSVRLYHSPSMLDYTVMVWQLLFLLLSLVNLYHQTSTAAQHGLMGYWKTTSISVEVSLVIVSLVYYVHYVYHPTMVMEVAEQLRRNHREHVDVSTLANSEQFSRTLRGIILFLLAVKCVTVVRLNRILAPSMPLLSLSSLLWPAISGLLLLSIFSCMGRLLYIERTFHSIQTVLWHFWSLRKSRDLISLWRDFYYFGLLYASSAMLTTMVFAVMIRKAKRSPSTKNDPTIREVLGCISQKFTGMKTQIPDCHTQKTYFLEECESLVDELLFKLNALSNSLHHTLPPKLHTYTDKDSPDASSTTELCKERLQDLVRSLSVGQGEAALTFPHDRSLLELQEEEEVKHQEGRCSVGCKESRLPETLWTADYRESMDEHWTEKKSSNGLGGATYSHVVVVEALVHHEQGTKN.

Residues 1–1602 (MFCLWIFSLA…LDQFLSVSRD (1602 aa)) lie on the Extracellular side of the membrane. 5 N-linked (GlcNAc...) asparagine glycosylation sites follow: Asn35, Asn133, Asn149, Asn220, and Asn267. PKD domains lie at 286–372 (AVRI…VKLN) and 370–454 (KLNR…PCQP). 7 N-linked (GlcNAc...) asparagine glycosylation sites follow: Asn383, Asn397, Asn486, Asn545, Asn693, Asn709, and Asn735. One can recognise an REJ domain in the interval 452–1338 (CQPPPVKNLG…ITFFLPASLI (887 aa)). Disordered regions lie at residues 767–829 (SPSR…QSDP) and 846–908 (DLRG…RPSV). The span at 779 to 799 (SELTDSPVSSVTVGFSGSESF) shows a compositional bias: polar residues. The segment covering 880–893 (SFPSDSDSFSHSSS) has biased composition (low complexity). N-linked (GlcNAc...) asparagine glycans are attached at residues Asn1080, Asn1101, Asn1201, Asn1318, Asn1437, Asn1490, and Asn1568. Residues 1436 to 1587 (HNFSITQEHL…KVLQQQIQSS (152 aa)) enclose the GAIN-B domain. 2 disulfide bridges follow: Cys1541/Cys1569 and Cys1556/Cys1571. The tract at residues 1541–1587 (CLSWEDQQGSWTQNGCRAQTNDKTSAVNCSCHHLKPLKVLQQQIQSS) is GPS. A helical transmembrane segment spans residues 1603 to 1623 (LTVVFVLLLCVSLNIPVLVWC). Over 1624-1812 (KKTDATSEEN…SPHLFTRAQR (189 aa)) the chain is Cytoplasmic. The 122-residue stretch at 1648–1769 (HFYAVTVHTG…GDGQVERMLR (122 aa)) folds into the PLAT domain. The helical transmembrane segment at 1813-1833 (LCVCLLLFLGYACVNIIITHQ) threads the bilayer. The Extracellular segment spans residues 1834-1851 (RDDQLPFDLGVIDVTSVS). A helical membrane pass occupies residues 1852-1872 (IATGLVSVVAVLPVAMVISFL). The Cytoplasmic portion of the chain corresponds to 1873–2005 (FRVKSGRMTL…YRLASLLYHC (133 aa)). A helical transmembrane segment spans residues 2006-2026 (VAWTLCLLFCLSCLILSAVLG). The Extracellular segment spans residues 2027-2040 (TRLNSGKILHWIHS). Residues 2041-2061 (LFVSLTFCFFVIHPATILVLA) form a helical membrane-spanning segment. Topologically, residues 2062–2151 (AVVSWRFKRS…KQAVIHKMLR (90 aa)) are cytoplasmic. A helical membrane pass occupies residues 2152-2172 (DLCLCGSMFFLMVCITYGSPV). Residues 2173-2344 (DEHYPLNAAF…QSVRLYHSPS (172 aa)) are Extracellular-facing. An N-linked (GlcNAc...) asparagine glycan is attached at Asn2218. Residues 2345–2365 (MLDYTVMVWQLLFLLLSLVNL) form a helical membrane-spanning segment. The Cytoplasmic segment spans residues 2366–2378 (YHQTSTAAQHGLM). The helical transmembrane segment at 2379–2401 (GYWKTTSISVEVSLVIVSLVYYV) threads the bilayer. Topologically, residues 2402-2442 (HYVYHPTMVMEVAEQLRRNHREHVDVSTLANSEQFSRTLRG) are extracellular. A helical transmembrane segment spans residues 2443–2463 (IILFLLAVKCVTVVRLNRILA). Over 2464–2467 (PSMP) the chain is Cytoplasmic. Residues 2468–2488 (LLSLSSLLWPAISGLLLLSIF) traverse the membrane as a helical segment. Residues 2489–2528 (SCMGRLLYIERTFHSIQTVLWHFWSLRKSRDLISLWRDFY) are Extracellular-facing. A helical membrane pass occupies residues 2529-2549 (YFGLLYASSAMLTTMVFAVMI). The Cytoplasmic segment spans residues 2550 to 2742 (RKAKRSPSTK…LVHHEQGTKN (193 aa)).

This sequence belongs to the polycystin family. Heterodimer. Interacts with pkd2 to form a calcium channel. Interacts with pkd2l1 to form ciliary calcium channel. Expressed in Kupffer's vesicle, an organ equivalent to the node.

The protein resides in the cell projection. Its subcellular location is the cilium membrane. In terms of biological role, component of a calcium-permeant ion channel formed by PKD1L2 and PKD1L1 in primary cilia, where it controls cilium calcium concentration, without affecting cytoplasmic calcium concentration, and regulates sonic hedgehog/SHH signaling and GLI2 transcription. The PKD1L1:PKD2L1 channel complex is mechanosensitive only at high pressures and is highly temperature sensitive. Also involved in left/right axis specification downstream of nodal flow by forming a complex with PKD2 in cilia to facilitate flow detection in left/right patterning. The protein is Polycystin-1-like protein 1 of Oryzias latipes (Japanese rice fish).